We begin with the raw amino-acid sequence, 893 residues long: Alpha-actinin-1 (893 aa).

Positions 1 to 248 (MDHHYDPQQT…IMTYVSSFYH (248 aa)) are actin-binding. Y13 carries the phosphotyrosine; by FAK1 modification. Calponin-homology (CH) domains are found at residues 32-136 (KQQR…LRFA) and 145-251 (TSAK…HAFS). Spectrin repeat units lie at residues 275-385 (QLME…WLLN), 395-500 (HLAE…ALER), 510-621 (QLYL…ALME), and 631-734 (RLRK…EVEN). EF-hand domains are found at residues 747-782 (EQMNEFRASFNHFDRDHSGTLGPEEFKACLISLGYD) and 788-823 (QGEAEFARIMSIVDPNRMGVVTFQAFIDFMSRETAD). Ca(2+) contacts are provided by D760, D762, S764, T766, and E771.

The protein belongs to the alpha-actinin family. As to quaternary structure, homodimer; antiparallel. Interacts with PDLIM4 (via PDZ domain).

It localises to the cytoplasm. Its subcellular location is the cytoskeleton. It is found in the myofibril. The protein localises to the sarcomere. The protein resides in the z line. It localises to the cell membrane. Its subcellular location is the cell junction. It is found in the cell projection. The protein localises to the ruffle. Its function is as follows. F-actin cross-linking protein is thought to anchor actin to a variety of intracellular structures. This is a bundling protein. This is Alpha-actinin-1 (ACTN1) from Gallus gallus (Chicken).